We begin with the raw amino-acid sequence, 357 residues long: GDP-mannose transporter 2 (357 aa).

The Cytoplasmic portion of the chain corresponds to 1–33 (MASARNGVSKDELLPVYERRSQRDGDISGSVKS). The helical transmembrane segment at 34 to 54 (FASTIGNSASAAVLAYCLSSI) threads the bilayer. At 55-68 (SMTLVNKYVVSGAS) the chain is on the lumenal side. A helical membrane pass occupies residues 69–89 (WNLSFLYLAMQSFIGTVAILA). Residues 90–107 (CKKTGLIQNLALFDLKKA) lie on the Cytoplasmic side of the membrane. A helical transmembrane segment spans residues 108 to 128 (QTWLPISLLLVGMIYTGNKAL). A topological domain (lumenal) is located at residue Gln-129. The chain crosses the membrane as a helical span at residues 130-150 (FLSVPVYTIFKNLTIIVIAYG). The Cytoplasmic portion of the chain corresponds to 151 to 161 (EVLMVGGGVKP). Residues 162 to 181 (LALLSFGLMVLSSVVAAWAD) form a helical membrane-spanning segment. Residues 182–196 (IQNATTATVGASSDS) lie on the Lumenal side of the membrane. The N-linked (GlcNAc...) asparagine glycan is linked to Asn-184. Residues 197–217 (TAAALSALNAGYAWMGTNVIF) form a helical membrane-spanning segment. Topologically, residues 218 to 236 (SASYALGMRRVIKKTNFDN) are cytoplasmic. Residues 237-257 (WDVMFYNNLLSIPILLLASVL) form a helical membrane-spanning segment. At 258-277 (AEDWSSENLQRNFPAELRQS) the chain is on the lumenal side. A helical transmembrane segment spans residues 278 to 298 (LFIGILYSGVAAVFISYCTAW). Topologically, residues 299–306 (CVRATSST) are cytoplasmic. A helical transmembrane segment spans residues 307 to 327 (TYAMVGALNKLPLAVAGIVFF). Over 328 to 332 (AAPVT) the chain is Lumenal. A helical membrane pass occupies residues 333–352 (FGSVSAIVLGFISGLVYARA). Residues 353–357 (KSTGA) lie on the Cytoplasmic side of the membrane.

This sequence belongs to the TPT transporter family. SLC35D subfamily. Homooligomer.

Its subcellular location is the golgi apparatus membrane. The protein localises to the cytoplasmic vesicle membrane. It localises to the endoplasmic reticulum membrane. Involved in the import of GDP-mannose from the cytoplasm into the Golgi lumen. This chain is GDP-mannose transporter 2 (gmt2), found in Neosartorya fischeri (strain ATCC 1020 / DSM 3700 / CBS 544.65 / FGSC A1164 / JCM 1740 / NRRL 181 / WB 181) (Aspergillus fischerianus).